We begin with the raw amino-acid sequence, 1026 residues long: Multidrug resistance protein MdtC (1026 aa).

The next 11 helical transmembrane spans lie at 15–35, 333–353, 360–380, 387–407, 431–451, 463–483, 528–548, 853–873, 897–917, 953–973, and 984–1004; these read ILIA…LPVA, EVEE…FLFL, LIPA…MYLC, LSLM…IVVL, VGFT…PLLL, FAVT…TLTP, LVGV…IAIP, LILI…LYES, LFNA…IGIV, PIMM…LSGG, and ITIV…TPVV.

Belongs to the resistance-nodulation-cell division (RND) (TC 2.A.6) family. MdtC subfamily. In terms of assembly, part of a tripartite efflux system composed of MdtA, MdtB and MdtC. MdtC forms a heteromultimer with MdtB.

The protein localises to the cell inner membrane. This is Multidrug resistance protein MdtC from Salmonella enteritidis PT4 (strain P125109).